The sequence spans 96 residues: Protein Vpr (96 aa).

The segment at 1–42 is homooligomerization; that stretch reads MEQAPEDQGPQREPYNEWTLELLEELKNEAVRHFPRPWLHGL. Ser-79 carries the phosphoserine; by host modification.

This sequence belongs to the HIV-1 VPR protein family. As to quaternary structure, homooligomer, may form homodimer. Interacts with p6-gag region of the Pr55 Gag precursor protein through a (Leu-X-X)4 motif near the C-terminus of the P6gag protein. Interacts with host UNG. May interact with host RAD23A/HHR23A. Interacts with host VPRBP/DCAF1, leading to hijack the CUL4A-RBX1-DDB1-DCAF1/VPRBP complex, mediating ubiquitination of host proteins such as TERT and ZGPAT and arrest of the cell cycle in G2 phase. In terms of processing, phosphorylated on several residues by host. These phosphorylations regulate VPR activity for the nuclear import of the HIV-1 pre-integration complex.

The protein localises to the virion. It localises to the host nucleus. It is found in the host extracellular space. During virus replication, may deplete host UNG protein, and incude G2-M cell cycle arrest. Acts by targeting specific host proteins for degradation by the 26S proteasome, through association with the cellular CUL4A-DDB1 E3 ligase complex by direct interaction with host VPRPB/DCAF-1. Cell cycle arrest reportedly occurs within hours of infection and is not blocked by antiviral agents, suggesting that it is initiated by the VPR carried into the virion. Additionally, VPR induces apoptosis in a cell cycle dependent manner suggesting that these two effects are mechanistically linked. Detected in the serum and cerebrospinal fluid of AIDS patient, VPR may also induce cell death to bystander cells. Its function is as follows. During virus entry, plays a role in the transport of the viral pre-integration (PIC) complex to the host nucleus. This function is crucial for viral infection of non-dividing macrophages. May act directly at the nuclear pore complex, by binding nucleoporins phenylalanine-glycine (FG)-repeat regions. In Human immunodeficiency virus type 1 group M subtype G (isolate 92NG083) (HIV-1), this protein is Protein Vpr.